A 224-amino-acid chain; its full sequence is MARMKARSAKGKRVAKDTWKSKVWYDIYTPQSFGGDVIGQTPANDPATLIGRISEISLRDLTNEHSKHMTRMYFKVDGVSGNNATSQFVGHDTTREYLKSQVRRRRSKINAIVDVRTKDGFKLRVKALVLTAVRARDHHKTEIRVKMEQIIKDMAKETAFAEFVHAMLMGGLGSKIYGDCKKMFPLKRVEIFKSEVLEFGKVVEAPVEEAAVEAPVEEAAETQE.

Belongs to the eukaryotic ribosomal protein eS1 family.

This is Small ribosomal subunit protein eS1 from Methanococcus maripaludis (strain C7 / ATCC BAA-1331).